Here is a 421-residue protein sequence, read N- to C-terminus: Phosphatidylinositol 5-phosphate 4-kinase type-2 gamma (421 aa).

Residue A2 is modified to N-acetylalanine. Residue S26 is modified to Phosphoserine. Residues 43–420 enclose the PIPK domain; sequence AADPLVGVFL…RFLDFITNIF (378 aa). Residues 69-75 form a required for interaction with PIP5K1A region; the sequence is VMLLPDD. A Phosphoserine modification is found at S349.

In terms of assembly, interacts with PIP5K1A; the interaction inhibits PIP5K1A kinase activity. Phosphorylated, phosphorylation is induced by EGF.

The protein localises to the endoplasmic reticulum. The protein resides in the cytoplasm. It catalyses the reaction a 1,2-diacyl-sn-glycero-3-phospho-(1D-myo-inositol-5-phosphate) + ATP = a 1,2-diacyl-sn-glycero-3-phospho-(1D-myo-inositol-4,5-bisphosphate) + ADP + H(+). The catalysed reaction is 1,2-dihexadecanoyl-sn-glycero-3-phospho-(1D-myo-inositol-5-phosphate) + ATP = 1,2-dihexadecanoyl-sn-glycero-3-phospho-(1D-myo-inositol-4,5-bisphosphate) + ADP + H(+). The enzyme catalyses 1,2-dihexadecanoyl-sn-glycero-3-phospho-(1D-myo-inositol-5-phosphate) + GTP = 1,2-dihexadecanoyl-sn-glycero-3-phospho-(1D-myo-inositol-4,5-bisphosphate) + GDP + H(+). Functionally, phosphatidylinositol 5-phosphate 4-kinase with low enzymatic activity. May be a GTP sensor, has higher GTP-dependent kinase activity than ATP-dependent kinase activity. PIP4Ks negatively regulate insulin signaling through a catalytic-independent mechanism. They interact with PIP5Ks and suppress PIP5K-mediated PtdIns(4,5)P2 synthesis and insulin-dependent conversion to PtdIns(3,4,5)P3. The protein is Phosphatidylinositol 5-phosphate 4-kinase type-2 gamma of Homo sapiens (Human).